A 295-amino-acid chain; its full sequence is Indole-3-glycerol phosphate synthase (295 aa).

This sequence belongs to the TrpC family.

It catalyses the reaction 1-(2-carboxyphenylamino)-1-deoxy-D-ribulose 5-phosphate + H(+) = (1S,2R)-1-C-(indol-3-yl)glycerol 3-phosphate + CO2 + H2O. The protein operates within amino-acid biosynthesis; L-tryptophan biosynthesis; L-tryptophan from chorismate: step 4/5. The polypeptide is Indole-3-glycerol phosphate synthase (Prochlorococcus marinus subsp. pastoris (strain CCMP1986 / NIES-2087 / MED4)).